The following is a 1868-amino-acid chain: MILKYSLLGNLLLLWMNIVNSVVLVGLYYGFLTTFSIGPSYLLLLRTRVMKEGSEKEVSATTAFIMGQFIIFISTYYPPLHLALSRPHTLTVLVLPYLLLHFLFFWNNHKSLFDHRSTHGNFIPNLSIQYVFLNNLIFQLFNHFILPSSTLTRLVDISMFRCNNKILFVISSFFGWLIGHILLMKSIGLVLSWPWEKMRSNALFRSNKYLVSKWRNSVSQIFSILLFITCVCYLGRMPSPIITKKLKESSKGEEKKKTEKERDVEMETISKTKKIEQEEERSVEEDLSISLEGRWNPYKIYETEEIRLNGKEKDEFGFKEKEKNELLWVEKSLLSLLFDYQRWNRPLRYIENDRFSNAVRNEMSQYFFNTCASDGKQIISFTYPPSLSTFFEMIQKKMYFRTAEKLPAEDLSNEWVSTTEKQRDNLRNEFINRIEAIDKGSLILDVVEKRARLCNDEEEQECLPKFYDPLLNGPYRGTIKKGYLYSIRNDSITSIQGSTKISWINKIHGILSKDYREFEHEIYKLDVKSSSAGIDDSSVSIGEFTEEAEEAEESRTRFKQFAFWGEEKEINSENQAEFLFDMVRADPNDQKISNQSIKIEEMKKKVPRWLYKLTADFDFEEEEEEEEEEDDEEEPTDDHGIRSRKAKRVVIYTDTDTDEDTDTNIINTTDSDQAKNSDQAKNSDQAKKSDQAKNSDQAEEHEMALIRYSQQSDFRRDIIKGSMRAQRRKTVTWEMFQTDVHSPLFLDRIDKTPLFSFDISRMMNLIFRNWMEEKSLKLKRKTSDYAGEGAKEEEHEEEKREYKRKEDKRQEDERIAIAEAWDTIPFAQAVRSSLLVTHSILRKYIVLPSLIIVKNIGRMLLFQFPEWYEDFKEWSREMHVKCTYNGVQLSETEFPKDWLTDGIQIKILFPFSLKPWRRSKLRSHHRDLRKKQKNFCFLTVWGVETELPFGSPRKNPFFFEPIHKTLEKKIRKVKKKGFFILKILKDNIKGFLEIFKEKIRWVIKIVLFIKSKVIFFFRLTRVFDPIPNNKDSKISNRIIHESPIRIGSRDWANDSLTERKINDLADKTIKIRDQVEKIMKDKKKKITESQKYIWQISKKRSARLIPKWNSFMKSFIERIYMGILLCITNIYKINVKFFLDSTLDSTKKILNRYTYNDETKEKDTNETNPNIIPFISTIKSLSTYTTTISSNSHSPIYCDLSSLSQAYVFYKLLQTQVSNKYKSESIFQYYRTYPFIKDRIKDYFHNYFHTRGISDSESKHKKLRNSGMNEWKNWLRNHYQYNLSRAKWSGLAPLKWRNKVNQHRTIKNNDLQKLDSYEEKDQLIHSEIKDFYKLGLLKSPSHTKKMKKHYRYDLLSYKYINYEYVKDSNIYGSPLQVNRHGEILSLSNYNTHKYKSFYVITINDCLEDKYIIDTDQNLDRKYFELRIIYFYPRNDIETRTSTDIGTFTKKNKTTKTGTNKKDLYIRIHQEIQTKQKEFFFDWMGMNEQMLDRTISNLDPWFLPEFVPLYDRYRTNPWIIPIKLLLFDFNGNKKSDLYIDPKVKSNQKERSNPKAESNQKEYLELENRNRDEKERQHQGNLISDTRNQKKDVGANSTGSDIKKRRKKKKFKSKKEAELDLLLKKYFLFQLRWGDSFNQRMTNNIKVYCLLLRLMDPSEIAISSIERGEMGLDVMLIHKDLSLPELIKRGIFIIEPVRLSTKWDGISIMYQTIAISLTHKVQHQTNRGYQAKKHIDENYFNGSIACHGGVRVNGDNNNYDLLVPENILSPNHRREFRIISRFNYRNRNVVNKNPVFFNRAKTNAQGFEKFVDRDKHFDTDTNNSLKWKVFLWPTHRLEDLACMNRYWFDTNNGSRFSMSRIHMYQRFGIR.

Transmembrane regions (helical) follow at residues 11-31 (LLLLWMNIVNSVVLVGLYYGF), 64-84 (FIMGQFIIFISTYYPPLHLAL), 87-107 (PHTLTVLVLPYLLLHFLFFWN), 126-146 (LSIQYVFLNNLIFQLFNHFIL), 166-186 (ILFVISSFFGWLIGHILLMKS), and 221-241 (IFSILLFITCVCYLGRMPSPI). The span at 248–276 (ESSKGEEKKKTEKERDVEMETISKTKKIE) shows a compositional bias: basic and acidic residues. Disordered stretches follow at residues 248–277 (ESSKGEEKKKTEKERDVEMETISKTKKIEQ), 617–643 (FDFEEEEEEEEEEDDEEEPTDDHGIRS), 658–700 (DEDT…QAEE), 782–806 (TSDYAGEGAKEEEHEEEKREYKRKE), and 1537–1607 (YIDP…RKKK). Residues 617–636 (FDFEEEEEEEEEEDDEEEPT) are compositionally biased toward acidic residues. Residues 674–683 (AKNSDQAKNS) show a composition bias toward polar residues. Composition is skewed to basic and acidic residues over residues 684–700 (DQAKKSDQAKNSDQAEE), 789–806 (GAKEEEHEEEKREYKRKE), and 1537–1576 (YIDPKVKSNQKERSNPKAESNQKEYLELENRNRDEKERQH).

The protein belongs to the TIC214 family. As to quaternary structure, part of the Tic complex.

It localises to the plastid. It is found in the chloroplast inner membrane. Involved in protein precursor import into chloroplasts. May be part of an intermediate translocation complex acting as a protein-conducting channel at the inner envelope. This is Protein TIC 214 from Nuphar advena (Common spatterdock).